A 347-amino-acid chain; its full sequence is FK506-binding protein-like (347 aa).

A disordered region spans residues 1 to 24 (METSPISPMNEKNTAQPQQREENA). A Phosphothreonine modification is found at Thr-3. TPR repeat units lie at residues 208–241 (AKEEHRRGTELFRAGNPQGAARCYGRALRLLLTL), 250–283 (TTLYANLAACQLLLGHPQLAAQSCDRVLEREPGH), and 284–317 (LKALYRRGVARAALGDLEKATADFKKVLAVDPKN).

Forms a ternary complex with CDKN1A/p21 and HSP90AB1/Hsp90.

Functionally, may be involved in response to X-ray. Regulates p21 protein stability by binding to Hsp90 and p21. This is FK506-binding protein-like (Fkbpl) from Mus musculus (Mouse).